The following is a 448-amino-acid chain: Putative sodium-coupled neutral amino acid transporter 11 (448 aa).

Residues 1-20 (MESERSCLLSSHDAGKGGSS) form a disordered region. The next 11 helical transmembrane spans lie at 22-42 (VSSA…IGLP), 52-72 (MGLL…ILLV), 94-114 (IGYI…MISY), 143-163 (FVIA…RDIA), 165-185 (LGKV…TVVV), 200-220 (AWVF…FALI), 246-266 (ISVG…YATF), 286-306 (TFGR…ECFV), 324-344 (SSHV…SLSY), 346-366 (CLGI…MFIF), and 389-409 (MILV…ALFP). 3 N-linked (GlcNAc...) asparagine glycosylation sites follow: asparagine 425, asparagine 440, and asparagine 444.

It belongs to the amino acid/polyamine transporter 2 family.

The protein resides in the membrane. Its function is as follows. Putative sodium-dependent amino acid/proton antiporter. This chain is Putative sodium-coupled neutral amino acid transporter 11 (slc38a11), found in Danio rerio (Zebrafish).